The following is a 125-amino-acid chain: Fluoride-specific ion channel FluC (125 aa).

Transmembrane regions (helical) follow at residues 1–21 (MIQA…RYFV), 32–52 (AFPW…GVFA), 68–88 (LLIT…LDAI), and 101–121 (IYIA…LAIM). Residues Gly75 and Thr78 each coordinate Na(+).

The protein belongs to the fluoride channel Fluc/FEX (TC 1.A.43) family.

It is found in the cell inner membrane. It catalyses the reaction fluoride(in) = fluoride(out). Its activity is regulated as follows. Na(+) is not transported, but it plays an essential structural role and its presence is essential for fluoride channel function. In terms of biological role, fluoride-specific ion channel. Important for reducing fluoride concentration in the cell, thus reducing its toxicity. In Rhizobium etli (strain ATCC 51251 / DSM 11541 / JCM 21823 / NBRC 15573 / CFN 42), this protein is Fluoride-specific ion channel FluC.